The following is a 314-amino-acid chain: DNA topoisomerase 1 (314 aa).

Residues 73 to 314 (GKMHVQRRNS…TDYITNTQTV (242 aa)) form the Topo IB-type catalytic domain. The O-(3'-phospho-DNA)-tyrosine intermediate role is filled by Tyr-273.

It belongs to the type IB topoisomerase family.

It carries out the reaction ATP-independent breakage of single-stranded DNA, followed by passage and rejoining.. Functionally, releases the supercoiling and torsional tension of DNA introduced during the DNA replication and transcription by transiently cleaving and rejoining one strand of the DNA duplex. Introduces a single-strand break via transesterification at a target site in duplex DNA. The scissile phosphodiester is attacked by the catalytic tyrosine of the enzyme, resulting in the formation of a DNA-(3'-phosphotyrosyl)-enzyme intermediate and the expulsion of a 5'-OH DNA strand. The free DNA strand then undergoes passage around the unbroken strand thus removing DNA supercoils. Finally, in the religation step, the DNA 5'-OH attacks the covalent intermediate to expel the active-site tyrosine and restore the DNA phosphodiester backbone. The polypeptide is DNA topoisomerase 1 (TOP1) (Oryctolagus cuniculus (Rabbit)).